The sequence spans 329 residues: Putative glucose ABC transporter permease protein TsgC13 (329 aa).

Helical transmembrane passes span 3–23, 32–52, 60–80, 89–109, 139–161, 193–213, and 216–236; these read FAAGLLNATVQAATVLLLAGL, GVLNLGVEGMMLVGALGGFVV, WLGFGVGIACGMALAAVHAFL, VISGVMLTLLGTGLTTFFGSG, AFFRSTATDYLALLAVPVVWFFL, LAVIIGGGFAGAAGAHLSLAF, and LWVPGMTVGRGWIAVALVVFA.

Belongs to the binding-protein-dependent transport system permease family. The complex is composed of two ATP-binding proteins (TsgD13), two transmembrane proteins (TsgB13 and TsgC13) and a solute-binding protein (TsgA13).

The protein localises to the cell membrane. Functionally, part of an ABC transporter complex involved in glucose import (Potential). Responsible for the translocation of the substrate across the membrane. This is Putative glucose ABC transporter permease protein TsgC13 (tsgC13) from Haloferax volcanii (strain ATCC 29605 / DSM 3757 / JCM 8879 / NBRC 14742 / NCIMB 2012 / VKM B-1768 / DS2) (Halobacterium volcanii).